The sequence spans 69 residues: DNA-directed RNA polymerase subunit epsilon (69 aa).

Belongs to the RNA polymerase subunit epsilon family. RNAP is composed of a core of 2 alpha, a beta and a beta' subunit. The core is associated with a delta subunit, and at least one of epsilon or omega. When a sigma factor is associated with the core the holoenzyme is formed, which can initiate transcription.

The enzyme catalyses RNA(n) + a ribonucleoside 5'-triphosphate = RNA(n+1) + diphosphate. Functionally, a non-essential component of RNA polymerase (RNAP). The protein is DNA-directed RNA polymerase subunit epsilon of Listeria welshimeri serovar 6b (strain ATCC 35897 / DSM 20650 / CCUG 15529 / CIP 8149 / NCTC 11857 / SLCC 5334 / V8).